A 137-amino-acid chain; its full sequence is Large ribosomal subunit protein uL16 (137 aa).

It belongs to the universal ribosomal protein uL16 family. In terms of assembly, part of the 50S ribosomal subunit.

Binds 23S rRNA and is also seen to make contacts with the A and possibly P site tRNAs. The chain is Large ribosomal subunit protein uL16 from Allorhizobium ampelinum (strain ATCC BAA-846 / DSM 112012 / S4) (Agrobacterium vitis (strain S4)).